The primary structure comprises 287 residues: Ethylene-inducing xylanase 3 (287 aa).

An N-terminal signal peptide occupies residues Met-1 to Ala-19. Positions Gln-31–Ala-219 constitute a GH11 domain. The active-site Nucleophile is the Glu-115. Catalysis depends on Glu-206, which acts as the Proton donor. The region spanning Ser-252–Leu-287 is the CBM1 domain.

This sequence belongs to the glycosyl hydrolase 11 (cellulase G) family.

The catalysed reaction is Endohydrolysis of (1-&gt;4)-beta-D-xylosidic linkages in xylans.. It functions in the pathway glycan degradation; xylan degradation. Endo-1,4-beta-xylanase involved in the hydrolysis of xylan, a major structural heterogeneous polysaccharide found in plant biomass representing the second most abundant polysaccharide in the biosphere, after cellulose. Exhibits immunity-inducing activity and induces cell death in Nicotiana benthamiana. This chain is Ethylene-inducing xylanase 3, found in Verticillium longisporum (Verticillium dahliae var. longisporum).